Consider the following 83-residue polypeptide: U3-theraphotoxin-Cg1a (83 aa).

Residues 1–23 (MRTFTLIAILTCAVLVIFHAAAA) form the signal peptide. Residues 24–44 (EELEAQDVIETEALATLDEER) constitute a propeptide that is removed on maturation. 3 cysteine pairs are disulfide-bonded: Cys-48–Cys-61, Cys-52–Cys-75, and Cys-69–Cys-80.

The protein belongs to the neurotoxin 12 (Hwtx-2) family. 03 (juruin) subfamily. In terms of processing, contains 3 disulfide bonds. Two different connectivities are observed in similar proteins (C1-C3, C2-C5, C4-C6 or C1-C4, C2-C5, C3-C6). As to expression, expressed by the venom gland.

It localises to the secreted. In terms of biological role, probable ion channel inhibitor. This is U3-theraphotoxin-Cg1a from Chilobrachys guangxiensis (Chinese earth tiger tarantula).